We begin with the raw amino-acid sequence, 414 residues long: Serine/threonine transporter SstT (414 aa).

A run of 8 helical transmembrane segments spans residues glycine 16–serine 36, leucine 46–valine 66, isoleucine 84–phenylalanine 104, alanine 143–leucine 163, alanine 180–valine 200, leucine 219–phenylalanine 239, methionine 300–valine 320, and valine 332–isoleucine 352.

The protein belongs to the dicarboxylate/amino acid:cation symporter (DAACS) (TC 2.A.23) family.

The protein localises to the cell inner membrane. The catalysed reaction is L-serine(in) + Na(+)(in) = L-serine(out) + Na(+)(out). It catalyses the reaction L-threonine(in) + Na(+)(in) = L-threonine(out) + Na(+)(out). Involved in the import of serine and threonine into the cell, with the concomitant import of sodium (symport system). The sequence is that of Serine/threonine transporter SstT from Salmonella dublin (strain CT_02021853).